A 243-amino-acid polypeptide reads, in one-letter code: Phosphoadenosine 5'-phosphosulfate reductase (243 aa).

Catalysis depends on cysteine 239, which acts as the Nucleophile; cysteine thiosulfonate intermediate.

It belongs to the PAPS reductase family. CysH subfamily.

The protein resides in the cytoplasm. It carries out the reaction [thioredoxin]-disulfide + sulfite + adenosine 3',5'-bisphosphate + 2 H(+) = [thioredoxin]-dithiol + 3'-phosphoadenylyl sulfate. It participates in sulfur metabolism; hydrogen sulfide biosynthesis; sulfite from sulfate: step 3/3. Catalyzes the formation of sulfite from phosphoadenosine 5'-phosphosulfate (PAPS) using thioredoxin as an electron donor. The sequence is that of Phosphoadenosine 5'-phosphosulfate reductase from Erwinia tasmaniensis (strain DSM 17950 / CFBP 7177 / CIP 109463 / NCPPB 4357 / Et1/99).